We begin with the raw amino-acid sequence, 619 residues long: DNA mismatch repair protein MutL (619 aa).

The protein belongs to the DNA mismatch repair MutL/HexB family.

In terms of biological role, this protein is involved in the repair of mismatches in DNA. It is required for dam-dependent methyl-directed DNA mismatch repair. May act as a 'molecular matchmaker', a protein that promotes the formation of a stable complex between two or more DNA-binding proteins in an ATP-dependent manner without itself being part of a final effector complex. This chain is DNA mismatch repair protein MutL, found in Xylella fastidiosa (strain M23).